Reading from the N-terminus, the 82-residue chain is DNA-directed RNA polymerase subunit Rpo5 (82 aa).

Belongs to the archaeal Rpo5/eukaryotic RPB5 RNA polymerase subunit family. As to quaternary structure, part of the RNA polymerase complex.

It is found in the cytoplasm. It catalyses the reaction RNA(n) + a ribonucleoside 5'-triphosphate = RNA(n+1) + diphosphate. In terms of biological role, DNA-dependent RNA polymerase (RNAP) catalyzes the transcription of DNA into RNA using the four ribonucleoside triphosphates as substrates. This is DNA-directed RNA polymerase subunit Rpo5 from Pyrococcus abyssi (strain GE5 / Orsay).